The sequence spans 270 residues: Shikimate dehydrogenase (NADP(+)) (270 aa).

Shikimate-binding positions include 15–17 (SKS) and Thr62. The active-site Proton acceptor is the Lys66. Shikimate contacts are provided by Asn87 and Asp102. Residues 127-131 (GAGGA), 151-156 (NRTVAR), and Met214 contribute to the NADP(+) site. Shikimate is bound at residue Tyr216. Gly238 serves as a coordination point for NADP(+).

The protein belongs to the shikimate dehydrogenase family. As to quaternary structure, homodimer.

The enzyme catalyses shikimate + NADP(+) = 3-dehydroshikimate + NADPH + H(+). It participates in metabolic intermediate biosynthesis; chorismate biosynthesis; chorismate from D-erythrose 4-phosphate and phosphoenolpyruvate: step 4/7. Its function is as follows. Involved in the biosynthesis of the chorismate, which leads to the biosynthesis of aromatic amino acids. Catalyzes the reversible NADPH linked reduction of 3-dehydroshikimate (DHSA) to yield shikimate (SA). The sequence is that of Shikimate dehydrogenase (NADP(+)) from Alkalilimnicola ehrlichii (strain ATCC BAA-1101 / DSM 17681 / MLHE-1).